The sequence spans 346 residues: Protein-glutamate methylesterase/protein-glutamine glutaminase (346 aa).

In terms of domain architecture, Response regulatory spans 6–123; it reads KVLVVDDSAF…SLDLEKVRDL (118 aa). Aspartate 57 bears the 4-aspartylphosphate mark. In terms of domain architecture, CheB-type methylesterase spans 155–346; that stretch reads PFDKTIIVIG…ADSIVRQCKR (192 aa). Residues serine 166, histidine 193, and aspartate 289 contribute to the active site.

Belongs to the CheB family. In terms of processing, phosphorylated by CheA. Phosphorylation of the N-terminal regulatory domain activates the methylesterase activity.

It is found in the cytoplasm. It catalyses the reaction [protein]-L-glutamate 5-O-methyl ester + H2O = L-glutamyl-[protein] + methanol + H(+). It carries out the reaction L-glutaminyl-[protein] + H2O = L-glutamyl-[protein] + NH4(+). Its function is as follows. Involved in chemotaxis. Part of a chemotaxis signal transduction system that modulates chemotaxis in response to various stimuli. Catalyzes the demethylation of specific methylglutamate residues introduced into the chemoreceptors (methyl-accepting chemotaxis proteins or MCP) by CheR. Also mediates the irreversible deamidation of specific glutamine residues to glutamic acid. The polypeptide is Protein-glutamate methylesterase/protein-glutamine glutaminase (Halalkalibacterium halodurans (strain ATCC BAA-125 / DSM 18197 / FERM 7344 / JCM 9153 / C-125) (Bacillus halodurans)).